Reading from the N-terminus, the 2157-residue chain is Genome polyprotein (2157 aa).

Gly2 carries N-myristoyl glycine; by host lipidation. Residues 2–1470 (GAQVSRQNVG…DLNIANSIIA (1469 aa)) lie on the Cytoplasmic side of the membrane. The tract at residues 567–584 (PIEQNPVENYIDEVLNEV) is amphipathic alpha-helix. Residues His875 and Asp892 each act as for protease 2A activity in the active site. Cys909 and Cys911 together coordinate Zn(2+). Cys963 serves as the catalytic For protease 2A activity. Residues Cys969 and His971 each coordinate Zn(2+). Residues 1095-1164 (SDSWLKKFTE…NLRAADSATQ (70 aa)) are membrane-binding. Residues 1095–1228 (SDSWLKKFTE…PPGTGKSITT (134 aa)) form an oligomerization region. The segment at 1116 to 1120 (GNKIS) is RNA-binding. The region spanning 1188 to 1350 (EAKRIKVLYN…YKDTQGKLDV (163 aa)) is the SF3 helicase domain. Positions 1357, 1368, and 1373 each coordinate Zn(2+). Residues 1357–1373 (CNVNTKIGNAKCCPFVC) form a C4-type; degenerate zinc finger. The RNA-binding stretch occupies residues 1400–1407 (EDKRRRQV). An oligomerization region spans residues 1411-1416 (MSAIFQ). Residues 1471–1486 (IIANIISIAGIIFVIY) lie within the membrane without spanning it. Residues 1487 to 2157 (KLFCSLQGPY…LLKHEWYEKF (671 aa)) are Cytoplasmic-facing. Residue Tyr1496 is modified to O-(5'-phospho-RNA)-tyrosine. Positions 1515–1693 (GPEEEFGRSI…FSAMLLRSYF (179 aa)) constitute a Peptidase C3 domain. Catalysis depends on for protease 3C activity residues His1554, Glu1585, and Cys1661. The 114-residue stretch at 1925 to 2038 (DCIMAFDYTN…SYKYTLDMEA (114 aa)) folds into the RdRp catalytic domain. Mg(2+) is bound by residues Asp1931 and Asp2024.

It belongs to the picornaviruses polyprotein family. As to quaternary structure, interacts with capsid protein VP1 and capsid protein VP3 to form heterotrimeric protomers. Interacts with capsid protein VP0, and capsid protein VP3 to form heterotrimeric protomers. Five protomers subsequently associate to form pentamers which serve as building blocks for the capsid. Interacts with capsid protein VP2, capsid protein VP3 and capsid protein VP4 following cleavage of capsid protein VP0. In terms of assembly, interacts with capsid protein VP1 and capsid protein VP3 in the mature capsid. As to quaternary structure, interacts with capsid protein VP0 and capsid protein VP1 to form heterotrimeric protomers. Five protomers subsequently associate to form pentamers which serve as building blocks for the capsid. Interacts with capsid protein VP4 in the mature capsid. Interacts with protein 2C; this interaction may be important for virion morphogenesis. Interacts with capsid protein VP1 and capsid protein VP3. In terms of assembly, homodimer. As to quaternary structure, homohexamer; forms a hexameric ring structure with 6-fold symmetry characteristic of AAA+ ATPases. Interacts (via N-terminus) with host RTN3 (via reticulon domain); this interaction is important for viral replication. Interacts with capsid protein VP3; this interaction may be important for virion morphogenesis. Interacts with protein 3CD. In terms of assembly, homodimer. Interacts with host GBF1. Interacts (via GOLD domain) with host ACBD3 (via GOLD domain); this interaction allows the formation of a viral protein 3A/ACBD3 heterotetramer with a 2:2 stoichiometry, which will stimulate the recruitment of host PI4KB in order to synthesize PI4P at the viral RNA replication sites. As to quaternary structure, interacts with RNA-directed RNA polymerase. Interacts with protein 3AB and with RNA-directed RNA polymerase. In terms of assembly, interacts with Viral protein genome-linked and with protein 3CD. It depends on Mg(2+) as a cofactor. Post-translationally, specific enzymatic cleavages in vivo by the viral proteases yield processing intermediates and the mature proteins. In terms of processing, myristoylation is required for the formation of pentamers during virus assembly. Further assembly of 12 pentamers and a molecule of genomic RNA generates the provirion. During virion maturation, immature virions are rendered infectious following cleavage of VP0 into VP4 and VP2. This maturation seems to be an autocatalytic event triggered by the presence of RNA in the capsid and it is followed by a conformational change infectious virion. Post-translationally, myristoylation is required during RNA encapsidation and formation of the mature virus particle. In terms of processing, VPg is uridylylated by the polymerase into VPg-pUpU. This acts as a nucleotide-peptide primer for the genomic RNA replication.

The protein resides in the virion. It localises to the host cytoplasm. It is found in the host cytoplasmic vesicle membrane. The protein localises to the host nucleus. It carries out the reaction a ribonucleoside 5'-triphosphate + H2O = a ribonucleoside 5'-diphosphate + phosphate + H(+). The catalysed reaction is Selective cleavage of Tyr-|-Gly bond in the picornavirus polyprotein.. The enzyme catalyses RNA(n) + a ribonucleoside 5'-triphosphate = RNA(n+1) + diphosphate. It catalyses the reaction Selective cleavage of Gln-|-Gly bond in the poliovirus polyprotein. In other picornavirus reactions Glu may be substituted for Gln, and Ser or Thr for Gly.. With respect to regulation, replication or transcription is subject to high level of random mutations by the nucleotide analog ribavirin. Its function is as follows. Forms an icosahedral capsid of pseudo T=3 symmetry with capsid proteins VP2 and VP3. The capsid is 300 Angstroms in diameter, composed of 60 copies of each capsid protein and enclosing the viral positive strand RNA genome. Capsid protein VP1 mainly forms the vertices of the capsid. Capsid protein VP1 interacts with host cell receptor to provide virion attachment to target host cells. This attachment induces virion internalization. Tyrosine kinases are probably involved in the entry process. After binding to its receptor, the capsid undergoes conformational changes. Capsid protein VP1 N-terminus (that contains an amphipathic alpha-helix) and capsid protein VP4 are externalized. Together, they shape a pore in the host membrane through which viral genome is translocated to host cell cytoplasm. In terms of biological role, forms an icosahedral capsid of pseudo T=3 symmetry with capsid proteins VP2 and VP3. The capsid is 300 Angstroms in diameter, composed of 60 copies of each capsid protein and enclosing the viral positive strand RNA genome. Lies on the inner surface of the capsid shell. After binding to the host receptor, the capsid undergoes conformational changes. Capsid protein VP4 is released, Capsid protein VP1 N-terminus is externalized, and together, they shape a pore in the host membrane through which the viral genome is translocated into the host cell cytoplasm. Functionally, component of immature procapsids, which is cleaved into capsid proteins VP4 and VP2 after maturation. Allows the capsid to remain inactive before the maturation step. Its function is as follows. Cysteine protease that cleaves viral polyprotein and specific host proteins. It is responsible for the autocatalytic cleavage between the P1 and P2 regions, which is the first cleavage occurring in the polyprotein. Also cleaves the host translation initiation factor EIF4G1, in order to shut down the capped cellular mRNA translation. Inhibits the host nucleus-cytoplasm protein and RNA trafficking by cleaving host members of the nuclear pores. Counteracts stress granule formation probably by antagonizing its assembly or promoting its dissassembly. In terms of biological role, plays an essential role in the virus replication cycle by acting as a viroporin. Creates a pore in the host endoplasmic reticulum and as a consequence releases Ca2+ in the cytoplasm of infected cell. In turn, high levels of cytoplasmic calcium may trigger membrane trafficking and transport of viral ER-associated proteins to viroplasms, sites of viral genome replication. Induces and associates with structural rearrangements of intracellular membranes. Displays RNA-binding, nucleotide binding and NTPase activities. May play a role in virion morphogenesis and viral RNA encapsidation by interacting with the capsid protein VP3. Functionally, localizes the viral replication complex to the surface of membranous vesicles. Together with protein 3CD binds the Cis-Active RNA Element (CRE) which is involved in RNA synthesis initiation. Acts as a cofactor to stimulate the activity of 3D polymerase, maybe through a nucleid acid chaperone activity. Its function is as follows. Localizes the viral replication complex to the surface of membranous vesicles. It inhibits host cell endoplasmic reticulum-to-Golgi apparatus transport and causes the disassembly of the Golgi complex, possibly through GBF1 interaction. This would result in depletion of MHC, trail receptors and IFN receptors at the host cell surface. Plays an essential role in viral RNA replication by recruiting ACBD3 and PI4KB at the viral replication sites, thereby allowing the formation of the rearranged membranous structures where viral replication takes place. In terms of biological role, acts as a primer for viral RNA replication and remains covalently bound to viral genomic RNA. VPg is uridylylated prior to priming replication into VPg-pUpU. The oriI viral genomic sequence may act as a template for this. The VPg-pUpU is then used as primer on the genomic RNA poly(A) by the RNA-dependent RNA polymerase to replicate the viral genome. During genome replication, the VPg-RNA linkage is removed by the host TDP2, thereby accelerating replication. During the late stage of the replication cycle, host TDP2 is excluded from sites of viral RNA synthesis and encapsidation, allowing for the generation of progeny virions. Involved in the viral replication complex and viral polypeptide maturation. It exhibits protease activity with a specificity and catalytic efficiency that is different from protease 3C. Protein 3CD lacks polymerase activity. Protein 3CD binds to the 5'UTR of the viral genome. Functionally, major viral protease that mediates proteolytic processing of the polyprotein. Cleaves host EIF5B, contributing to host translation shutoff. Also cleaves host PABPC1, contributing to host translation shutoff. Its function is as follows. Replicates the viral genomic RNA on the surface of intracellular membranes. May form linear arrays of subunits that propagate along a strong head-to-tail interaction called interface-I. Covalently attaches UMP to a tyrosine of VPg, which is used to prime RNA synthesis. The positive stranded RNA genome is first replicated at virus induced membranous vesicles, creating a dsRNA genomic replication form. This dsRNA is then used as template to synthesize positive stranded RNA genomes. ss(+)RNA genomes are either translated, replicated or encapsidated. The sequence is that of Genome polyprotein from Homo sapiens (Human).